The primary structure comprises 406 residues: Mitochondrial ribosome-associated GTPase 2 (406 aa).

Residues 15-406 form a localized in the mitochondria region; it reads FEGVGHWALS…LGQGRQPLRW (392 aa). Residues 30–406 are not localized in the mitochondria; that stretch reads KPSRLLPQQA…LGQGRQPLRW (377 aa). One can recognise an Obg domain in the interval 70–224; that stretch reads RYFVDYRRVL…RVLHLELKTV (155 aa). The OBG-type G domain occupies 225–390; sequence AHAGMVGFPN…LLLHLKVLYD (166 aa). GTP contacts are provided by residues 231–238, 256–260, 278–281, 345–348, and 371–373; these read GFPNAGKS, FTTLK, DIPG, NKID, and SAL. Mg(2+)-binding residues include Ser-238 and Thr-258.

Belongs to the TRAFAC class OBG-HflX-like GTPase superfamily. OBG GTPase family. As to quaternary structure, associates with the mitochondrial ribosome large subunit; the association occurs in a GTP-dependent manner. Mg(2+) serves as cofactor.

It localises to the mitochondrion. The protein resides in the mitochondrion inner membrane. Its function is as follows. Plays a role in the regulation of the mitochondrial ribosome assembly and of translational activity. Displays GTPase activity. Involved in the ribosome maturation process. In Pongo abelii (Sumatran orangutan), this protein is Mitochondrial ribosome-associated GTPase 2 (MTG2).